We begin with the raw amino-acid sequence, 163 residues long: Ribonuclease P protein component 4 (163 aa).

4 residues coordinate Zn(2+): cysteine 66, cysteine 69, cysteine 96, and cysteine 99. The disordered stretch occupies residues 110 to 163; that stretch reads GPRGGAPISPPAAEYGSGGRDSGEREDKGPQGPPRQGGRDNRQGGGHQGGPKGD. Residues 152 to 163 show a composition bias toward gly residues; the sequence is QGGGHQGGPKGD.

It belongs to the eukaryotic/archaeal RNase P protein component 4 family. As to quaternary structure, consists of a catalytic RNA component and at least 4-5 protein subunits. The cofactor is Zn(2+).

Its subcellular location is the cytoplasm. It catalyses the reaction Endonucleolytic cleavage of RNA, removing 5'-extranucleotides from tRNA precursor.. In terms of biological role, part of ribonuclease P, a protein complex that generates mature tRNA molecules by cleaving their 5'-ends. The protein is Ribonuclease P protein component 4 of Aeropyrum pernix (strain ATCC 700893 / DSM 11879 / JCM 9820 / NBRC 100138 / K1).